The chain runs to 604 residues: Prostaglandin G/H synthase 2 (604 aa).

The first 17 residues, 1–17, serve as a signal peptide directing secretion; the sequence is MLARALLLCAVLALSHT. The EGF-like domain occupies 18-55; that stretch reads ANPCCSHPCQNRGVCMSVGFDQYKCDCTRTGFYGENCS. Cystine bridges form between C21–C32, C22–C145, C26–C42, and C44–C54. A glycan (N-linked (GlcNAc...) asparagine) is linked at N53. R106 contacts substrate. N130 is a glycosylation site (N-linked (GlcNAc...) asparagine). H193 serves as the catalytic Proton acceptor. Residue Y341 participates in substrate binding. The active-site For cyclooxygenase activity is Y371. Residue H374 participates in heme b binding. N396 carries N-linked (GlcNAc...) asparagine glycosylation. An S-nitrosocysteine modification is found at C526. C555 and C561 are oxidised to a cystine. S565 carries the post-translational modification O-acetylserine. The N-linked (GlcNAc...) asparagine glycan is linked to N580.

This sequence belongs to the prostaglandin G/H synthase family. In terms of assembly, homodimer. Requires heme b as cofactor. S-nitrosylation by NOS2 (iNOS) activates enzyme activity. S-nitrosylation may take place on different Cys residues in addition to Cys-526. Post-translationally, acetylated at Ser-565 by SPHK1. During neuroinflammation, acetylation by SPHK1 promotes neuronal secretion of specialized preresolving mediators (SPMs), especially 15-R-lipoxin A4, which results in an increase of phagocytic microglia.

It localises to the microsome membrane. It is found in the endoplasmic reticulum membrane. The protein resides in the nucleus inner membrane. The protein localises to the nucleus outer membrane. The catalysed reaction is (5Z,8Z,11Z,14Z)-eicosatetraenoate + AH2 + 2 O2 = prostaglandin H2 + A + H2O. It carries out the reaction (5Z,8Z,11Z,14Z)-eicosatetraenoate + 2 O2 = prostaglandin G2. It catalyses the reaction prostaglandin G2 + AH2 = prostaglandin H2 + A + H2O. The enzyme catalyses (5Z,8Z,11Z,14Z,17Z)-eicosapentaenoate + 2 O2 = prostaglandin G3. The catalysed reaction is prostaglandin G3 + AH2 = prostaglandin H3 + A + H2O. It carries out the reaction (8Z,11Z,14Z)-eicosatrienoate + 2 O2 = prostaglandin G1. It catalyses the reaction prostaglandin G1 + AH2 = prostaglandin H1 + A + H2O. The enzyme catalyses 2-(5Z,8Z,11Z,14Z)-eicosatetraenoyl-sn-glycero-3-phosphoethanolamine + 2 O2 = 2-(prostaglandin G2)-sn-glycero-3-phosphoethanolamine. The catalysed reaction is 2-(prostaglandin G2)-sn-glycero-3-phosphoethanolamine + AH2 = 2-(prostaglandin H2)-sn-glycero-3-phosphoethanolamine + A + H2O. It carries out the reaction 2-(5Z,8Z,11Z,14Z)-eicosatetraenoyl-sn-glycero-3-phosphocholine + 2 O2 = 2-(prostaglandin G2)-sn-glycero-3-phosphocholine. It catalyses the reaction 2-(prostaglandin G2)-sn-glycero-3-phosphocholine + AH2 = 2-(prostaglandin H2)-sn-glycero-3-phosphocholine + A + H2O. The enzyme catalyses (15S)-hydroperoxy-(5Z,8Z,11Z,13E)-eicosatetraenoate + AH2 = (15S)-hydroxy-(5Z,8Z,11Z,13E)-eicosatetraenoate + A + H2O. The catalysed reaction is 2-(5Z,8Z,11Z,14Z)-eicosatetraenoyl-sn-glycero-3-phosphocholine + AH2 + O2 = 2-[(15S)-hydroxy-(5Z,8Z,11Z,13E)-eicosatetraenoyl]-sn-glycero-3-phosphocholine + A + H2O. It carries out the reaction 2-(5Z,8Z,11Z,14Z)-eicosatetraenoyl-sn-glycero-3-phosphocholine + AH2 + O2 = 2-[(15R)-hydroxy-(5Z,8Z,11Z,13E)-eicosatetraenoyl]-sn-glycero-3-phosphocholine + A + H2O. It catalyses the reaction 2-(5Z,8Z,11Z,14Z)-eicosatetraenoyl-sn-glycero-3-phosphocholine + AH2 + O2 = 2-[(11R)-hydroxy-(5Z,8Z,12E,14Z)-eicosatetraenoyl]-sn-glycero-3-phosphocholine + A + H2O. The enzyme catalyses (9Z,12Z)-octadecadienoate + AH2 + O2 = 9-hydroxy-(10E,12Z)-octadecadienoate + A + H2O. The catalysed reaction is (9Z,12Z)-octadecadienoate + AH2 + O2 = 13-hydroxy-(9Z,11E)-octadecadienoate + A + H2O. It carries out the reaction (5Z,8Z,11Z,14Z)-eicosatetraenoate + AH2 + O2 = (15R)-hydroxy-(5Z,8Z,11Z,13E)-eicosatetraenoate + A + H2O. It catalyses the reaction (5Z,8Z,11Z,14Z)-eicosatetraenoate + AH2 + O2 = (11R)-hydroxy-(5Z,8Z,12E,14Z)-eicosatetraenoate + A + H2O. The enzyme catalyses (5Z,8Z,11Z,14Z,17Z)-eicosapentaenoate + AH2 + O2 = (11R)-hydroxy-(5Z,8Z,12E,14Z,17Z)-eicosapentaenoate + A + H2O. The catalysed reaction is (5Z,8Z,11Z,14Z,17Z)-eicosapentaenoate + AH2 + O2 = (18S)-hydroxy-(5Z,8Z,11Z,14Z,16E)-eicosapentaenoate + A + H2O. It carries out the reaction (5Z,8Z,11Z,14Z,17Z)-eicosapentaenoate + AH2 + O2 = (18R)-hydroxy-(5Z,8Z,11Z,14Z,16E)-eicosapentaenoate + A + H2O. It catalyses the reaction (5Z,8Z,11Z,14Z,17Z)-eicosapentaenoate + AH2 + O2 = (15R)-hydroxy-(5Z,8Z,11Z,13E,17Z)-eicosapentaenoate + A + H2O. The enzyme catalyses (5Z,8Z,11Z,14Z,17Z)-eicosapentaenoate + AH2 + O2 = (15S)-hydroxy-(5Z,8Z,11Z,13E,17Z)-eicosapentaenoate + A + H2O. The catalysed reaction is (7Z,10Z,13Z,16Z,19Z)-docosapentaenoate + AH2 + O2 = 13R-hydroxy-(7Z,10Z,14E,16Z,19Z)-docosapentaenoate + A + H2O. It carries out the reaction (4Z,7Z,10Z,13Z,16Z,19Z)-docosahexaenoate + AH2 + O2 = 13-hydroxy-(4Z,7Z,10Z,14E,16Z,19Z)-docosahexaenoate + A + H2O. It catalyses the reaction (5S)-hydroxy-(6E,8Z,11Z,14Z)-eicosatetraenoate + AH2 + O2 = (5S,15R)-dihydroxy-(6E,8Z,11Z,13E)-eicosatetraenoate + A + H2O. The enzyme catalyses (4Z,7Z,10Z,13Z,16Z,19Z)-docosahexaenoate + AH2 + O2 = 17R-hydroxy-(4Z,7Z,10Z,13Z,15E,19Z)-docosahexaenoate + A + H2O. The catalysed reaction is (5S)-hydroxy-(6E,8Z,11Z,14Z)-eicosatetraenoate + AH2 + O2 = (5S,15S)-dihydroxy-(6E,8Z,11Z,13E)-eicosatetraenoate + A + H2O. It carries out the reaction (5S)-hydroxy-(6E,8Z,11Z,14Z)-eicosatetraenoate + AH2 + O2 = (5S,11R)-dihydroxy-(6E,8Z,12E,14Z)-eicosatetraenoate + A + H2O. It catalyses the reaction 2-(5Z,8Z,11Z,14Z-eicosatetraenoyl)-glycerol + 2 O2 = 2-glyceryl-prostaglandin G2. The enzyme catalyses 2-glyceryl-prostaglandin G2 + AH2 = 2-glyceryl-prostaglandin H2 + A + H2O. The catalysed reaction is (5Z,8Z,11Z,14Z)-eicosatetraenoate + O2 = (15R)-hydroperoxy-(5Z,8Z,11Z,13E)-eicosatetraenoate. It carries out the reaction (5Z,8Z,11Z,14Z)-eicosatetraenoate + O2 = 11R-hydroperoxy-(5Z,8Z,12E,14Z)-eicosatetraenoate. It catalyses the reaction (9Z,12Z)-octadecadienoate + AH2 + O2 = (9R)-hydroxy-(10E,12Z)-octadecadienoate + A + H2O. The enzyme catalyses (9Z,12Z)-octadecadienoate + AH2 + O2 = (9S)-hydroxy-(10E,12Z)-octadecadienoate + A + H2O. The catalysed reaction is (9Z,12Z)-octadecadienoate + AH2 + O2 = (13S)-hydroxy-(9Z,11E)-octadecadienoate + A + H2O. It carries out the reaction (9Z,12Z)-octadecadienoate + AH2 + O2 = (13R)-hydroxy-(9Z,11E)-octadecadienoate + A + H2O. The protein operates within lipid metabolism; prostaglandin biosynthesis. Its activity is regulated as follows. The cyclooxygenase activity is inhibited by nonsteroidal anti-inflammatory drugs (NSAIDs) including aspirin, ibuprofen, flurbiprofen, celecoxib, flufenamic, mefenamic and tolfenamic acids as well as by hydroperoxide scavenger erythrocyte glutathione peroxidase GPX1. Aspirin triggers enzyme acetylation turning off its ability to generate pro-inflammatory prostaglandins, but switches on its capacity to produce anti-inflammatory lipid mediators involved in inflammation resolution. Aspirin enhances lipoxygenase-type activity toward production of epimers with R stereochemistry such as 15R-HETE, 18R-HEPE, 15R-HEPE and 17R-HDHA. Atorvastatin, a cholesterol-lowering drug, triggers enzyme S-nitrosylation increasing production of 13-series resolvins (RvTs). Dual cyclooxygenase and peroxidase in the biosynthesis pathway of prostanoids, a class of C20 oxylipins mainly derived from arachidonate ((5Z,8Z,11Z,14Z)-eicosatetraenoate, AA, C20:4(n-6)), with a particular role in the inflammatory response. The cyclooxygenase activity oxygenates AA to the hydroperoxy endoperoxide prostaglandin G2 (PGG2), and the peroxidase activity reduces PGG2 to the hydroxy endoperoxide prostaglandin H2 (PGH2), the precursor of all 2-series prostaglandins and thromboxanes. This complex transformation is initiated by abstraction of hydrogen at carbon 13 (with S-stereochemistry), followed by insertion of molecular O2 to form the endoperoxide bridge between carbon 9 and 11 that defines prostaglandins. The insertion of a second molecule of O2 (bis-oxygenase activity) yields a hydroperoxy group in PGG2 that is then reduced to PGH2 by two electrons. Similarly catalyzes successive cyclooxygenation and peroxidation of dihomo-gamma-linoleate (DGLA, C20:3(n-6)) and eicosapentaenoate (EPA, C20:5(n-3)) to corresponding PGH1 and PGH3, the precursors of 1- and 3-series prostaglandins. In an alternative pathway of prostanoid biosynthesis, converts 2-arachidonoyl lysophopholipids to prostanoid lysophopholipids, which are then hydrolyzed by intracellular phospholipases to release free prostanoids. Metabolizes 2-arachidonoyl glycerol yielding the glyceryl ester of PGH2, a process that can contribute to pain response. Generates lipid mediators from n-3 and n-6 polyunsaturated fatty acids (PUFAs) via a lipoxygenase-type mechanism. Oxygenates PUFAs to hydroperoxy compounds and then reduces them to corresponding alcohols. Plays a role in the generation of resolution phase interaction products (resolvins) during both sterile and infectious inflammation. Metabolizes docosahexaenoate (DHA, C22:6(n-3)) to 17R-HDHA, a precursor of the D-series resolvins (RvDs). As a component of the biosynthetic pathway of E-series resolvins (RvEs), converts eicosapentaenoate (EPA, C20:5(n-3)) primarily to 18S-HEPE that is further metabolized by ALOX5 and LTA4H to generate 18S-RvE1 and 18S-RvE2. In vascular endothelial cells, converts docosapentaenoate (DPA, C22:5(n-3)) to 13R-HDPA, a precursor for 13-series resolvins (RvTs) shown to activate macrophage phagocytosis during bacterial infection. In activated leukocytes, contributes to oxygenation of hydroxyeicosatetraenoates (HETE) to diHETES (5,15-diHETE and 5,11-diHETE). Can also use linoleate (LA, (9Z,12Z)-octadecadienoate, C18:2(n-6)) as substrate and produce hydroxyoctadecadienoates (HODEs) in a regio- and stereospecific manner, being (9R)-HODE ((9R)-hydroxy-(10E,12Z)-octadecadienoate) and (13S)-HODE ((13S)-hydroxy-(9Z,11E)-octadecadienoate) its major products. During neuroinflammation, plays a role in neuronal secretion of specialized preresolving mediators (SPMs) 15R-lipoxin A4 that regulates phagocytic microglia. The polypeptide is Prostaglandin G/H synthase 2 (Homo sapiens (Human)).